The sequence spans 428 residues: MQSLTLQPISRINGTINLPGSKSVSNRALLLAAFAKGTTRLTNLLDSDDIRYMLNALTALDIPYRLSADRTVCEVEGRSGNITGKSGLELFLGNAGTAMRPLAAALCLGDNEIVLTGEPRMKERPIGHLVDALRQGGAKIDYIEQENYPPLHIKGGFSGGKVTVDGSVSSQFLTALLMAAPLAVNNTEIHIQGDLVSKPYIDITLALMKSFGVTVENHQYQVFYIRGRQQYLSPGQYLVEGDASSASYFLAAAAIKGGIVRVTGIGKNSLQGDTKFANVLEQMGATIRWGDDFVECERGTLTGIDMDMNAIPDAAMTIATTALFAQGETVIRNIYNWRVKETDRLNAMATELRKVGAEVEEGLDYIRVIPPEKIQHAEIETYNDHRVAMCFSLVALSNTPVTILDPGCTAKTFPDYFNQLKKLSEYTT.

Positions 22, 23, and 27 each coordinate 3-phosphoshikimate. K22 contributes to the phosphoenolpyruvate binding site. Residues G96 and R124 each contribute to the phosphoenolpyruvate site. Positions 169, 170, 171, 197, 313, 336, and 340 each coordinate 3-phosphoshikimate. Phosphoenolpyruvate is bound at residue Q171. The active-site Proton acceptor is the D313. The phosphoenolpyruvate site is built by R344, R386, and K411.

Belongs to the EPSP synthase family. In terms of assembly, monomer.

It is found in the cytoplasm. The catalysed reaction is 3-phosphoshikimate + phosphoenolpyruvate = 5-O-(1-carboxyvinyl)-3-phosphoshikimate + phosphate. The protein operates within metabolic intermediate biosynthesis; chorismate biosynthesis; chorismate from D-erythrose 4-phosphate and phosphoenolpyruvate: step 6/7. Catalyzes the transfer of the enolpyruvyl moiety of phosphoenolpyruvate (PEP) to the 5-hydroxyl of shikimate-3-phosphate (S3P) to produce enolpyruvyl shikimate-3-phosphate and inorganic phosphate. This is 3-phosphoshikimate 1-carboxyvinyltransferase from Xenorhabdus nematophila (strain ATCC 19061 / DSM 3370 / CCUG 14189 / LMG 1036 / NCIMB 9965 / AN6).